We begin with the raw amino-acid sequence, 511 residues long: Cytochrome P450 monooxygenase nodR (511 aa).

A helical transmembrane segment spans residues 8–28; it reads ILFPISWEQSPIFLAVGLIFA. N-linked (GlcNAc...) asparagine glycans are attached at residues asparagine 76 and asparagine 373. Heme is bound at residue cysteine 452.

Belongs to the cytochrome P450 family. It depends on heme as a cofactor.

The protein resides in the membrane. It functions in the pathway secondary metabolite biosynthesis. Functionally, cytochrome P450 monooxygenase; part of the gene cluster that mediates the biosynthesis of the indole diterpenes nodulisporic acids (NA). Nodulisporic acid A (NAA) and its chemically modified derivatives are of particular significance because of their highly potent insecticidal activity against blood-feeding arthropods and lack of observable adverse effects on mammals, in particular the tremogenicity associated with the paspaline-derived IDTs is not observed. The geranylgeranyl diphosphate (GGPP) synthase ggs1, localized outside of the cluster, is proposed to catalyze the first step in nodulisporic acid biosynthesis via conversion of farnesyl pyrophosphate and isopentyl pyrophosphate into geranylgeranyl pyrophosphate (GGPP). Condensation of indole-3-glycerol phosphate with GGPP by the prenyl transferase nodC then forms 3-geranylgeranylindole (3-GGI). Epoxidation by the FAD-dependent monooxygenase nodM leads to a single-epoxidized-GGI that is substrate of the terpene cyclase nodB for cyclization to yield emindole SB. The terminal methyl carbon, C28, of emindole SB is then oxidized by the cytochrome P450 monooxygenase nodW to produce nodulisporic acid F (NAF), the pentacyclic core of NAA. NAF is converted to nodulisporic acid E (NAE) via prenylation. This step is probably performed by one of the indole diterpene prenyltransferases nodD1 or nodD2. Several oxidation steps performed by the FAD-linked oxidoreductase nodO and one of the cytochrome P450 monooxygenase nodR, nodX or nodZ further convert NAE to nodulisporic acid D (NAD). NAD is substrate of cytochrome P450 monooxygenase nodJ to produce the precursor of nodulisporic acid C (NAC), converted to NAC by one of the indole diterpene prenyltransferases nodD1 or nodD2. The FAD-dependent monooxygenase nodY2 then oxidizes NAC to nodulisporic acid B (NAB). Finally NAB is converted to NAA by one of the cytochrome P450 monooxygenases nodR, nodX or nodZ. This is Cytochrome P450 monooxygenase nodR from Hypoxylon pulicicidum.